Reading from the N-terminus, the 116-residue chain is Small ribosomal subunit protein bS16 (116 aa).

The protein belongs to the bacterial ribosomal protein bS16 family.

This is Small ribosomal subunit protein bS16 from Chlamydia muridarum (strain MoPn / Nigg).